The primary structure comprises 279 residues: Shikimate dehydrogenase (NADP(+)) (279 aa).

Residues 19–21 and Thr-66 contribute to the shikimate site; that span reads SFS. Catalysis depends on Lys-70, which acts as the Proton acceptor. Glu-82 contacts NADP(+). The shikimate site is built by Asn-91 and Asp-106. Residues 130–134 and Leu-222 contribute to the NADP(+) site; that span reads GSGGA. Shikimate is bound at residue Tyr-224. Residue Gly-245 participates in NADP(+) binding.

This sequence belongs to the shikimate dehydrogenase family. As to quaternary structure, homodimer.

It carries out the reaction shikimate + NADP(+) = 3-dehydroshikimate + NADPH + H(+). It participates in metabolic intermediate biosynthesis; chorismate biosynthesis; chorismate from D-erythrose 4-phosphate and phosphoenolpyruvate: step 4/7. Its function is as follows. Involved in the biosynthesis of the chorismate, which leads to the biosynthesis of aromatic amino acids. Catalyzes the reversible NADPH linked reduction of 3-dehydroshikimate (DHSA) to yield shikimate (SA). The protein is Shikimate dehydrogenase (NADP(+)) of Methanococcus maripaludis (strain C6 / ATCC BAA-1332).